The primary structure comprises 317 residues: Ribonuclease H2 subunit A (317 aa).

The region spanning 43–270 is the RNase H type-2 domain; sequence PCCLGVDEAG…AKDMLETKGG (228 aa). D49, E50, and D166 together coordinate a divalent metal cation.

The protein belongs to the RNase HII family. Eukaryotic subfamily. The cofactor is Mn(2+). It depends on Mg(2+) as a cofactor.

The enzyme catalyses Endonucleolytic cleavage to 5'-phosphomonoester.. Its function is as follows. Endonuclease that specifically degrades the RNA of RNA-DNA hybrids. Participates in DNA replication. In Neurospora crassa (strain ATCC 24698 / 74-OR23-1A / CBS 708.71 / DSM 1257 / FGSC 987), this protein is Ribonuclease H2 subunit A (rnh-201).